Consider the following 130-residue polypeptide: Sec-independent protein translocase protein TatB (130 aa).

Residues 2–22 form a helical membrane-spanning segment; sequence FANIGWGEMLVLVVVGLVVLG. The disordered stretch occupies residues 108–130; sequence DAVASAQEAPDEPVRPPFDSDAT.

Belongs to the TatB family. The Tat system comprises two distinct complexes: a TatABC complex, containing multiple copies of TatA, TatB and TatC subunits, and a separate TatA complex, containing only TatA subunits. Substrates initially bind to the TatABC complex, which probably triggers association of the separate TatA complex to form the active translocon.

It localises to the cell membrane. In terms of biological role, part of the twin-arginine translocation (Tat) system that transports large folded proteins containing a characteristic twin-arginine motif in their signal peptide across membranes. Together with TatC, TatB is part of a receptor directly interacting with Tat signal peptides. TatB may form an oligomeric binding site that transiently accommodates folded Tat precursor proteins before their translocation. The polypeptide is Sec-independent protein translocase protein TatB (Mycobacterium ulcerans (strain Agy99)).